We begin with the raw amino-acid sequence, 323 residues long: Acetyl-coenzyme A carboxylase carboxyl transferase subunit alpha (323 aa).

The region spanning 39 to 293 (RLAGKSQQLT…KRSLAESLRQ (255 aa)) is the CoA carboxyltransferase C-terminal domain.

This sequence belongs to the AccA family. As to quaternary structure, acetyl-CoA carboxylase is a heterohexamer composed of biotin carboxyl carrier protein (AccB), biotin carboxylase (AccC) and two subunits each of ACCase subunit alpha (AccA) and ACCase subunit beta (AccD).

The protein localises to the cytoplasm. It catalyses the reaction N(6)-carboxybiotinyl-L-lysyl-[protein] + acetyl-CoA = N(6)-biotinyl-L-lysyl-[protein] + malonyl-CoA. Its pathway is lipid metabolism; malonyl-CoA biosynthesis; malonyl-CoA from acetyl-CoA: step 1/1. Its function is as follows. Component of the acetyl coenzyme A carboxylase (ACC) complex. First, biotin carboxylase catalyzes the carboxylation of biotin on its carrier protein (BCCP) and then the CO(2) group is transferred by the carboxyltransferase to acetyl-CoA to form malonyl-CoA. The chain is Acetyl-coenzyme A carboxylase carboxyl transferase subunit alpha from Cupriavidus pinatubonensis (strain JMP 134 / LMG 1197) (Cupriavidus necator (strain JMP 134)).